Here is a 1275-residue protein sequence, read N- to C-terminus: Inner capsid protein lambda-1 (1275 aa).

The span at 1-12 (MKRIPRKTRGKS) shows a compositional bias: basic residues. The segment at 1–147 (MKRIPRKTRG…NVDNEGGDNQ (147 aa)) is disordered. Residues 18-35 (DSTERADDGSAQLRDKQS) show a composition bias toward basic and acidic residues. Positions 55–66 (TRPSLQTVQKAT) are enriched in polar residues. 2 stretches are compositionally biased toward basic and acidic residues: residues 80 to 98 (AVDK…HVEA) and 105 to 117 (ATKR…DKQK). A compositionally biased stretch (polar residues) spans 118–139 (AQVTYNDTGINNANELSRSGNV). A C2H2-type zinc finger spans residues 181–203 (YQCHVCSAVLFSPLDLDAHVASH).

This sequence belongs to the turreted BTV-fold inner capsid family. In terms of assembly, homodecamer; each decamer is made up of two conformers of VP2, called VP2A and VP2B. 12 homodecamers assemble to form an icosahedral capsid. Interacts with protein mu-NS; in viral inclusions. Mg(2+) serves as cofactor. Mn(2+) is required as a cofactor.

The protein resides in the virion. The catalysed reaction is ATP + H2O = ADP + phosphate + H(+). In terms of biological role, inner capsid protein that self-assembles to form an icosahedral capsid with a T=2 symmetry, which consists of 120 copies of VP2, with channels at each of its five-fold vertices. This capsid constitutes the innermost concentric layer of the viral mature particle. Functionally, displays NTPase, RNA 5'-triphosphatase (RTPase) and RNA helicase activities and probably participates in transcription of the viral genome. Helicase activity might be involved in unwinding or reannealing dsRNA during RNA synthesis. RTPase enzymatic activity represents the first step in RNA capping, which yields a 5'-diphosphorylated plus-strand RNA. This chain is Inner capsid protein lambda-1, found in Reovirus type 2 (strain D5/Jones) (T2J).